A 100-amino-acid chain; its full sequence is Large ribosomal subunit protein uL23 (100 aa).

The protein belongs to the universal ribosomal protein uL23 family. Part of the 50S ribosomal subunit. Contacts protein L29, and trigger factor when it is bound to the ribosome.

Its function is as follows. One of the early assembly proteins it binds 23S rRNA. One of the proteins that surrounds the polypeptide exit tunnel on the outside of the ribosome. Forms the main docking site for trigger factor binding to the ribosome. This Yersinia enterocolitica serotype O:8 / biotype 1B (strain NCTC 13174 / 8081) protein is Large ribosomal subunit protein uL23.